The following is a 213-amino-acid chain: Pyrrolidone-carboxylate peptidase (213 aa).

Residues Glu78, Cys141, and His165 contribute to the active site.

Belongs to the peptidase C15 family. Homotetramer.

It is found in the cytoplasm. The enzyme catalyses Release of an N-terminal pyroglutamyl group from a polypeptide, the second amino acid generally not being Pro.. Functionally, removes 5-oxoproline from various penultimate amino acid residues except L-proline. This is Pyrrolidone-carboxylate peptidase from Clostridium perfringens (strain SM101 / Type A).